The primary structure comprises 343 residues: RNA 3'-terminal phosphate cyclase (343 aa).

Residues glutamine 102 and 284-288 each bind ATP; that span reads FLGDQ. Residue histidine 308 is the Tele-AMP-histidine intermediate of the active site.

Belongs to the RNA 3'-terminal cyclase family. Type 1 subfamily.

The protein localises to the cytoplasm. The catalysed reaction is a 3'-end 3'-phospho-ribonucleotide-RNA + ATP = a 3'-end 2',3'-cyclophospho-ribonucleotide-RNA + AMP + diphosphate. In terms of biological role, catalyzes the conversion of 3'-phosphate to a 2',3'-cyclic phosphodiester at the end of RNA. The mechanism of action of the enzyme occurs in 3 steps: (A) adenylation of the enzyme by ATP; (B) transfer of adenylate to an RNA-N3'P to produce RNA-N3'PP5'A; (C) and attack of the adjacent 2'-hydroxyl on the 3'-phosphorus in the diester linkage to produce the cyclic end product. The biological role of this enzyme is unknown but it is likely to function in some aspects of cellular RNA processing. The protein is RNA 3'-terminal phosphate cyclase (rtcA) of Thermococcus kodakarensis (strain ATCC BAA-918 / JCM 12380 / KOD1) (Pyrococcus kodakaraensis (strain KOD1)).